Consider the following 182-residue polypeptide: Keratin, high-sulfur matrix protein, B2D (182 aa).

6 consecutive repeat copies span residues 27 to 36 (PTCCQTSCCQ), 37 to 46 (PTSIQTSCCQ), 47 to 56 (PTSIQTSCCQ), 57 to 66 (PTSIQTSCCQ), 67 to 76 (PISIQTSCCQ), and 77 to 86 (PTCLQTSGCE). The interval 27 to 86 (PTCCQTSCCQPTSIQTSCCQPTSIQTSCCQPTSIQTSCCQPISIQTSCCQPTCLQTSGCE) is 6 X 10 AA tandem repeats.

Its function is as follows. The keratin products of mammalian epidermal derivatives such as wool and hair consist of microfibrils embedded in a rigid matrix of other proteins. The matrix proteins include the high-sulfur and high-tyrosine keratins, having molecular weights of 6-20 kDa, whereas the microfibrils contain the larger, low-sulfur keratins (40-56 kDa). This is Keratin, high-sulfur matrix protein, B2D from Ovis aries (Sheep).